Consider the following 1097-residue polypeptide: DNA-directed RNA polymerase subunit beta (1097 aa).

This sequence belongs to the RNA polymerase beta chain family. As to quaternary structure, in plastids the minimal PEP RNA polymerase catalytic core is composed of four subunits: alpha, beta, beta', and beta''. When a (nuclear-encoded) sigma factor is associated with the core the holoenzyme is formed, which can initiate transcription.

The protein localises to the plastid. Its subcellular location is the chloroplast. The catalysed reaction is RNA(n) + a ribonucleoside 5'-triphosphate = RNA(n+1) + diphosphate. Its function is as follows. DNA-dependent RNA polymerase catalyzes the transcription of DNA into RNA using the four ribonucleoside triphosphates as substrates. The protein is DNA-directed RNA polymerase subunit beta of Rhodomonas salina (Cryptomonas salina).